The chain runs to 505 residues: uncharacterized protein (505 aa).

The chain crosses the membrane as a helical span at residues isoleucine 11–leucine 27.

The protein localises to the membrane. This is an uncharacterized protein from Sinorhizobium fredii (strain NBRC 101917 / NGR234).